The following is a 339-amino-acid chain: Ketol-acid reductoisomerase (NADP(+)) (339 aa).

In terms of domain architecture, KARI N-terminal Rossmann spans 1 to 182 (MRVYYDRDAD…GGGRSGIIET (182 aa)). Residues 24-27 (YGSQ), lysine 48, serine 51, threonine 53, and 83-86 (DELQ) each bind NADP(+). Histidine 108 is an active-site residue. An NADP(+)-binding site is contributed by glycine 134. The KARI C-terminal knotted domain occupies 183–328 (NFREECETDL…AKLRGMMPWI (146 aa)). Residues aspartate 191, glutamate 195, glutamate 227, and glutamate 231 each coordinate Mg(2+). Residue serine 252 participates in substrate binding.

This sequence belongs to the ketol-acid reductoisomerase family. Mg(2+) is required as a cofactor.

It carries out the reaction (2R)-2,3-dihydroxy-3-methylbutanoate + NADP(+) = (2S)-2-acetolactate + NADPH + H(+). It catalyses the reaction (2R,3R)-2,3-dihydroxy-3-methylpentanoate + NADP(+) = (S)-2-ethyl-2-hydroxy-3-oxobutanoate + NADPH + H(+). Its pathway is amino-acid biosynthesis; L-isoleucine biosynthesis; L-isoleucine from 2-oxobutanoate: step 2/4. It functions in the pathway amino-acid biosynthesis; L-valine biosynthesis; L-valine from pyruvate: step 2/4. In terms of biological role, involved in the biosynthesis of branched-chain amino acids (BCAA). Catalyzes an alkyl-migration followed by a ketol-acid reduction of (S)-2-acetolactate (S2AL) to yield (R)-2,3-dihydroxy-isovalerate. In the isomerase reaction, S2AL is rearranged via a Mg-dependent methyl migration to produce 3-hydroxy-3-methyl-2-ketobutyrate (HMKB). In the reductase reaction, this 2-ketoacid undergoes a metal-dependent reduction by NADPH to yield (R)-2,3-dihydroxy-isovalerate. In Rhizobium rhizogenes (strain K84 / ATCC BAA-868) (Agrobacterium radiobacter), this protein is Ketol-acid reductoisomerase (NADP(+)).